Consider the following 230-residue polypeptide: RING finger protein 141 (230 aa).

The N-myristoyl glycine moiety is linked to residue G2. An RING-type zinc finger spans residues 155 to 192 (CCICMDGRADLILPCAHSFCQKCIDKWSDRHRNCPICR).

It is found in the membrane. May be involved in spermatogenesis. The protein is RING finger protein 141 (RNF141) of Bos taurus (Bovine).